The following is a 357-amino-acid chain: S-adenosyl-L-methionine:benzoic acid/salicylic acid carboxyl methyltransferase 2 (357 aa).

Tyrosine 18 contributes to the S-adenosyl-L-homocysteine binding site. A benzoate-binding site is contributed by glutamine 25. S-adenosyl-L-homocysteine contacts are provided by cysteine 59, asparagine 64, aspartate 96, leucine 97, serine 135, and phenylalanine 136. Tryptophan 157 lines the benzoate pocket. Asparagine 168, aspartate 254, phenylalanine 256, and asparagine 257 together coordinate Mg(2+). Glutamine 260 lines the benzoate pocket.

It belongs to the methyltransferase superfamily. Type-7 methyltransferase family. In terms of tissue distribution, predominantly expressed in petal limbs and tubes of corollas.

The enzyme catalyses benzoate + S-adenosyl-L-methionine = methyl benzoate + S-adenosyl-L-homocysteine. It carries out the reaction salicylate + S-adenosyl-L-methionine = methyl salicylate + S-adenosyl-L-homocysteine. Its pathway is aromatic compound metabolism. Functionally, converts benzoic acid into the volatile ester methyl benzoates. This scent, mostly produced in a rhythmical, diurnal manner, attracts the pollinators. The chain is S-adenosyl-L-methionine:benzoic acid/salicylic acid carboxyl methyltransferase 2 from Petunia hybrida (Petunia).